The sequence spans 850 residues: Protein translocase subunit SecA (850 aa).

ATP-binding positions include Gln87, 105 to 109, and Asp494; that span reads GEGKT. Positions 834, 836, 845, and 846 each coordinate Zn(2+).

The protein belongs to the SecA family. In terms of assembly, monomer and homodimer. Part of the essential Sec protein translocation apparatus which comprises SecA, SecYEG and auxiliary proteins SecDF-YajC and YidC. The cofactor is Zn(2+).

It is found in the cell inner membrane. The protein localises to the cytoplasm. It catalyses the reaction ATP + H2O + cellular proteinSide 1 = ADP + phosphate + cellular proteinSide 2.. Part of the Sec protein translocase complex. Interacts with the SecYEG preprotein conducting channel. Has a central role in coupling the hydrolysis of ATP to the transfer of proteins into and across the cell membrane, serving as an ATP-driven molecular motor driving the stepwise translocation of polypeptide chains across the membrane. The protein is Protein translocase subunit SecA of Desulfotalea psychrophila (strain LSv54 / DSM 12343).